We begin with the raw amino-acid sequence, 1782 residues long: AF4/FMR2 family member lilli (1782 aa).

Disordered regions lie at residues 42 to 84, 150 to 313, 434 to 515, 605 to 637, 691 to 732, 768 to 820, 839 to 891, 911 to 1064, 1091 to 1126, 1166 to 1234, 1296 to 1327, 1386 to 1420, 1450 to 1484, and 1674 to 1701; these read NMED…PSEG, ASSS…PPPE, MPTP…QQQQ, GGSS…NLSR, EKLH…QQRY, GALP…LQIP, KVQP…SNKK, VAAA…AAAS, AGNS…QHKQ, LPQS…KQGQ, ARQH…TPKD, LKQE…EQLS, QESA…QQQQ, and GNTP…GKIV. Over residues 54-80 the composition is skewed to basic and acidic residues; it reads REKYERQQGIQSDDRETSLFGEPRRLN. Composition is skewed to low complexity over residues 164–180 and 211–260; these read QQQQ…QQQQ and PSSS…MSSP. Residues 435–447 are compositionally biased toward pro residues; that stretch reads PTPPKASPTPPAI. Phosphothreonine is present on T443. The span at 450–463 shows a compositional bias: basic and acidic residues; sequence MKTEKNHSLEKQDS. Over residues 465-475 the composition is skewed to acidic residues; that stretch reads LENDLELSESD. Phosphoserine occurs at positions 472 and 474. Composition is skewed to low complexity over residues 484–515 and 609–622; these read SAGN…QQQQ and GSCM…SSSN. A compositionally biased stretch (polar residues) spans 623-634; sequence KTPSPTDSNRWN. Over residues 691-701 the composition is skewed to basic and acidic residues; sequence EKLHDEPRHVG. Composition is skewed to low complexity over residues 714 to 730 and 782 to 805; these read QQQQ…QQQQ and SDSG…GGSS. Residues 859-869 show a composition bias toward basic residues; sequence PRQKKPRKKKM. Phosphoserine occurs at positions 878 and 879. A DNA-binding region (a.T hook) is located at residues 920-932; that stretch reads KKGRGRPRKQAQQ. Positions 929–972 are enriched in low complexity; sequence QAQQQQQQQQQQLQQSGNLSSASASSSQAKGPTLTAAKKPLAKA. Phosphoserine occurs at positions 949 and 951. Over residues 973-982 the composition is skewed to polar residues; it reads SVSNSNSTAP. Composition is skewed to low complexity over residues 996–1018, 1033–1064, 1105–1116, and 1174–1196; these read SNSS…TMAA, SSSS…AAAS, SVGSSSNSSSSS, and SSSD…SSSS. Residues 1308 to 1318 are compositionally biased toward polar residues; it reads AQQNGHLSSRS. Residues 1450–1460 are compositionally biased toward polar residues; it reads QESAANGSPNK. S1457 bears the Phosphoserine mark. Composition is skewed to low complexity over residues 1461-1484 and 1674-1694; these read LQQQ…QQQQ and GNTP…SGSN.

Belongs to the AF4 family.

It localises to the nucleus. Functionally, has a role in transcriptional regulation. Acts in parallel with the Ras/MAPK and the PI3K/PKB pathways in the control of cell identity and cellular growth. Essential for regulation of the cytoskeleton and cell growth but not for cell proliferation or growth rate. Required specifically for the microtubule-based basal transport of lipid droplets. Plays a partially redundant function downstream of Raf in cell fate specification in the developing eye. Pair-rule protein that regulates embryonic cellularization, gastrulation and segmentation. The chain is AF4/FMR2 family member lilli from Drosophila mojavensis (Fruit fly).